A 92-amino-acid chain; its full sequence is Late cornified envelope protein 3E (92 aa).

Low complexity predominate over residues 1–10 (MSCQQNQKQC). Disordered stretches follow at residues 1 to 22 (MSCQ…PKCP) and 64 to 92 (RRQR…GGCC). A compositionally biased stretch (pro residues) spans 11–22 (QPPPKCPSPKCP). Residues 76 to 92 (GQQGGGSGCCHGSGGCC) are compositionally biased toward gly residues.

This sequence belongs to the LCE family. As to quaternary structure, interacts with CYSRT1. In terms of tissue distribution, skin-specific. Expression was readily detected in adult trunk skin, adult arm skin, fetal skin, penal skin, vulva, esophagus and tongue. Not expressed in the cervix, rectum, lung, colon, or placenta.

Its function is as follows. Precursors of the cornified envelope of the stratum corneum. This chain is Late cornified envelope protein 3E (LCE3E), found in Homo sapiens (Human).